Consider the following 278-residue polypeptide: Pantothenate synthetase (278 aa).

27–34 (MGNLHEGH) contributes to the ATP binding site. Catalysis depends on His34, which acts as the Proton donor. Residue Gln58 participates in (R)-pantoate binding. Gln58 is a binding site for beta-alanine. Residue 147–150 (GEKD) participates in ATP binding. Gln153 is a binding site for (R)-pantoate. 184 to 187 (YSSR) provides a ligand contact to ATP.

This sequence belongs to the pantothenate synthetase family. As to quaternary structure, homodimer.

Its subcellular location is the cytoplasm. It carries out the reaction (R)-pantoate + beta-alanine + ATP = (R)-pantothenate + AMP + diphosphate + H(+). Its pathway is cofactor biosynthesis; (R)-pantothenate biosynthesis; (R)-pantothenate from (R)-pantoate and beta-alanine: step 1/1. In terms of biological role, catalyzes the condensation of pantoate with beta-alanine in an ATP-dependent reaction via a pantoyl-adenylate intermediate. The chain is Pantothenate synthetase from Acidithiobacillus ferrooxidans (strain ATCC 23270 / DSM 14882 / CIP 104768 / NCIMB 8455) (Ferrobacillus ferrooxidans (strain ATCC 23270)).